A 774-amino-acid chain; its full sequence is E3 ubiquitin-protein ligase UHRF1 (774 aa).

Residues 1–78 (MWIQVRTMDG…IQLLVRQSLA (78 aa)) enclose the Ubiquitin-like domain. Phosphoserine occurs at positions 76, 91, 93, 95, and 161. Positions 83-120 (TKERDSELSDSDSGYGVGHSESDKSSTHGEGTADGDDK) are disordered. Tudor-like stretches follow at residues 129 to 205 (GLYK…ARAR) and 212 to 280 (DLEV…IELP). Residue Lys276 forms a Glycyl lysine isopeptide (Lys-Gly) (interchain with G-Cter in SUMO2) linkage. Position 284 is a phosphoserine (Ser284). The segment at 293 to 298 (RKSGPS) is linker. The residue at position 295 (Ser295) is a Phosphoserine; by PKA. The segment at 296–363 (GPSCQYCKDD…EWYCPSCRTD (68 aa)) adopts a PHD-type zinc-finger fold. Histone H3R2me0 binding stretches follow at residues 330–334 (CDECD) and 350–352 (PPE). The residue at position 365 (Ser365) is a Phosphoserine. Residue Lys382 forms a Glycyl lysine isopeptide (Lys-Gly) (interchain with G-Cter in SUMO2) linkage. Positions 382 to 605 (KMASATSSSR…QLGLTMQYPE (224 aa)) are methyl-CpG binding and interaction with HDAC1. Position 396 is an N6-acetyllysine (Lys396). A YDG domain is found at 416–578 (GPIPGVPVGT…FIVWRYLLRR (163 aa)). Residues 442–443 (HV) form a required to promote base flipping region. DNA is bound by residues 460-461 (AG) and Asp466. 2 required for formation of a 5-methylcytosine-binding pocket regions span residues 463-466 (YEDD) and 475-478 (YTGS). Phosphoserine is present on Ser511. Lys542 is modified (N6-acetyllysine; alternate). Lys542 participates in a covalent cross-link: Glycyl lysine isopeptide (Lys-Gly) (interchain with G-Cter in SUMO2); alternate. The interval 616 to 657 (KNRKRPAKALEQGPSSSKIGKSKRKSTGPATTSPRVSKKSKL) is disordered. A Phosphoserine; by CDK1 modification is found at Ser631. Phosphoserine occurs at positions 641 and 648. A Glycyl lysine isopeptide (Lys-Gly) (interchain with G-Cter in SUMO2) cross-link involves residue Lys656. The segment at 705–744 (CICCQELVFRPVTTVCQHNVCKDCLDRSFRAQVFSCPACR) adopts an RING-type zinc-finger fold. Position 751 is a phosphoserine (Ser751).

Interacts with DNMT3A and DNMT3B. Interacts with DNMT1; the interaction is direct. Interacts with USP7; leading to its deubiquitination. Interacts with histone H3. Interacts with HDAC1, but not with HDAC2. Interacts with BLTP3A. Interacts with PML. Interacts with EHMT2. Binds methylated CpG containing oligonucleotides. Interacts with ZNF263; recruited to the SIX3 promoter along with other proteins involved in chromatin modification and transcriptional corepression where it contributes to transcriptional repression. Interacts with UHRF2. Interacts with FANCD2. Interacts with TET1 isoform 2; this interaction induces the recruitment of TET1 isoform 2 to replicating heterochromatin. In terms of processing, phosphorylation at Ser-295 of the linker region decreases the binding to H3K9me3. Phosphorylation at Ser-631 by CDK1 during M phase impairs interaction with USP7, preventing deubiquitination and leading to degradation by the proteasome. Ubiquitinated; which leads to proteasomal degradation. Autoubiquitinated; interaction with USP7 leads to deubiquitination and prevents degradation. Ubiquitination and degradation takes place during M phase, when phosphorylation at Ser-631 prevents interaction with USP7 and subsequent deubiquitination. Polyubiquitination may be stimulated by DNA damage.

The protein localises to the nucleus. The enzyme catalyses S-ubiquitinyl-[E2 ubiquitin-conjugating enzyme]-L-cysteine + [acceptor protein]-L-lysine = [E2 ubiquitin-conjugating enzyme]-L-cysteine + N(6)-ubiquitinyl-[acceptor protein]-L-lysine.. The protein operates within protein modification; protein ubiquitination. Functionally, multidomain protein that acts as a key epigenetic regulator by bridging DNA methylation and chromatin modification. Specifically recognizes and binds hemimethylated DNA at replication forks via its YDG domain and recruits DNMT1 methyltransferase to ensure faithful propagation of the DNA methylation patterns through DNA replication. In addition to its role in maintenance of DNA methylation, also plays a key role in chromatin modification: through its tudor-like regions and PHD-type zinc fingers, specifically recognizes and binds histone H3 trimethylated at 'Lys-9' (H3K9me3) and unmethylated at 'Arg-2' (H3R2me0), respectively, and recruits chromatin proteins. Enriched in pericentric heterochromatin where it recruits different chromatin modifiers required for this chromatin replication. Also localizes to euchromatic regions where it negatively regulates transcription possibly by impacting DNA methylation and histone modifications. Has E3 ubiquitin-protein ligase activity by mediating the ubiquitination of target proteins such as histone H3 and PML. It is still unclear how E3 ubiquitin-protein ligase activity is related to its role in chromatin in vivo. Plays a role in DNA repair by cooperating with UHRF2 to ensure recruitment of FANCD2 to interstrand cross-links (ICLs) leading to FANCD2 activation. Plays a pivotal role in the establishment of correct spindle architecture by catalyzing the 'Lys-63'-linked ubiquitination of KIF11, thereby controlling KIF11 localization on the spindle. The sequence is that of E3 ubiquitin-protein ligase UHRF1 (Uhrf1) from Rattus norvegicus (Rat).